A 284-amino-acid chain; its full sequence is Acetylglutamate kinase (284 aa).

Substrate-binding positions include G64 to G65, R86, and N179.

This sequence belongs to the acetylglutamate kinase family. ArgB subfamily.

It is found in the cytoplasm. It catalyses the reaction N-acetyl-L-glutamate + ATP = N-acetyl-L-glutamyl 5-phosphate + ADP. It functions in the pathway amino-acid biosynthesis; L-arginine biosynthesis; N(2)-acetyl-L-ornithine from L-glutamate: step 2/4. Its function is as follows. Catalyzes the ATP-dependent phosphorylation of N-acetyl-L-glutamate. The protein is Acetylglutamate kinase of Prochlorococcus marinus subsp. pastoris (strain CCMP1986 / NIES-2087 / MED4).